We begin with the raw amino-acid sequence, 212 residues long: Large ribosomal subunit protein uL3 (212 aa).

The segment at 133 to 156 (SMTHGSKNHRLPGSTGAGTTPGRV) is disordered.

This sequence belongs to the universal ribosomal protein uL3 family. Part of the 50S ribosomal subunit. Forms a cluster with proteins L14 and L19.

One of the primary rRNA binding proteins, it binds directly near the 3'-end of the 23S rRNA, where it nucleates assembly of the 50S subunit. The protein is Large ribosomal subunit protein uL3 of Crocosphaera subtropica (strain ATCC 51142 / BH68) (Cyanothece sp. (strain ATCC 51142)).